The sequence spans 192 residues: MYQQQILIELQEAQQVLNDFINDQHNLKLIQEAALLITDSFKNGGKILSCGNGGSHCDAMHFAEELTGRYRENRPGYPAIAISDPSHLSCVSNDFGYEYVFSRYVEAIGQKGDILFCLSTSGNSKNVINAIIAAKAKGMKIIAMTGKDGGKIAELADIEIRVPHFRYADRIQEIHIKVIHILMMLIEFEMAK.

An SIS domain is found at 37–192 (ITDSFKNGGK…MMLIEFEMAK (156 aa)). Residue 52–54 (NGG) coordinates substrate. Zn(2+) is bound by residues H61 and E65. Residues E65, 93–94 (ND), 119–121 (STS), S124, and Q172 contribute to the substrate site. The Zn(2+) site is built by Q172 and H180.

The protein belongs to the SIS family. GmhA subfamily. As to quaternary structure, homotetramer. The cofactor is Zn(2+).

The protein resides in the cytoplasm. It catalyses the reaction 2 D-sedoheptulose 7-phosphate = D-glycero-alpha-D-manno-heptose 7-phosphate + D-glycero-beta-D-manno-heptose 7-phosphate. Its pathway is carbohydrate biosynthesis; D-glycero-D-manno-heptose 7-phosphate biosynthesis; D-glycero-alpha-D-manno-heptose 7-phosphate and D-glycero-beta-D-manno-heptose 7-phosphate from sedoheptulose 7-phosphate: step 1/1. In terms of biological role, catalyzes the isomerization of sedoheptulose 7-phosphate in D-glycero-D-manno-heptose 7-phosphate. This Glaesserella parasuis serovar 5 (strain SH0165) (Haemophilus parasuis) protein is Phosphoheptose isomerase.